The sequence spans 121 residues: MSITNEQILDAVAEMSVMQVVELIEAMEEKFGVTAAAAVVAGGASAEAAAEQTEFDVILTAAGANKVQVIKAVRGATGLGLKEAKGLVDSAPAALKEGVDKAEAEALKAQLEEAGASVEVK.

This sequence belongs to the bacterial ribosomal protein bL12 family. In terms of assembly, homodimer. Part of the ribosomal stalk of the 50S ribosomal subunit. Forms a multimeric L10(L12)X complex, where L10 forms an elongated spine to which 2 to 4 L12 dimers bind in a sequential fashion. Binds GTP-bound translation factors.

Functionally, forms part of the ribosomal stalk which helps the ribosome interact with GTP-bound translation factors. Is thus essential for accurate translation. In Vibrio atlanticus (strain LGP32) (Vibrio splendidus (strain Mel32)), this protein is Large ribosomal subunit protein bL12.